A 3948-amino-acid polypeptide reads, in one-letter code: Hybrid PKS-NRPS synthetase fsa1 (3948 aa).

The Ketosynthase family 3 (KS3) domain occupies 4-438; it reads SEPIAVIGSA…GTNAHAIIEA (435 aa). Residues Cys-177, His-316, and His-358 each act as for beta-ketoacyl synthase activity in the active site. The segment at 543 to 846 is malonyl-CoA:ACP transacylase (MAT) domain; that stretch reads IFTGQGTQWP…LDTIEAISEG (304 aa). Residues 931 to 1066 are N-terminal hotdog fold; sequence HPLLGRRCHD…AQIKASLGTP (136 aa). Residues 931–1233 form a dehydratase (DH) domain region; sequence HPLLGRRCHD…MELVPFSPAT (303 aa). Residues 931–1235 enclose the PKS/mFAS DH domain; sequence HPLLGRRCHD…LVPFSPATPA (305 aa). Residue His-964 is the Proton acceptor; for dehydratase activity of the active site. Residues 1081-1235 form a C-terminal hotdog fold region; the sequence is LRPVSVDRFY…LVPFSPATPA (155 aa). Residue Asp-1141 is the Proton donor; for dehydratase activity of the active site. Residues 1381–1578 form a methyltransferase (MT) domain region; sequence YEQGFGLNLV…TTPPVHKILP (198 aa). The tract at residues 2105–2277 is ketoreductase (KR) domain; the sequence is TFLLIGLTGE…VAASSIDISS (173 aa). The region spanning 2389 to 2464 is the Carrier 1 domain; that stretch reads AIIKESFIVR…DLVDESLDLL (76 aa). Ser-2424 is modified (O-(pantetheine 4'-phosphoryl)serine). The disordered stretch occupies residues 2475 to 2555; sequence EAGNAHPAKP…TDNLTPPRTF (81 aa). Composition is skewed to polar residues over residues 2487–2505 and 2513–2528; these read VIPQTPTRVTPPESSQGTS and GSDSSRSPIDTPLTSW. The segment covering 2529–2541 has biased composition (basic and acidic residues); that stretch reads DRQDLSPPDKSDD. The span at 2542 to 2551 shows a compositional bias: polar residues; that stretch reads APNSTDNLTP. Residues 2547-2976 are condensation (C) domain; the sequence is DNLTPPRTFP…TQVLLRSYLS (430 aa). Positions 3000-3402 are adenylation (A) (KR) domain; sequence LKVAVDAGKA…PDTFFGTSGT (403 aa). The 78-residue stretch at 3540 to 3617 folds into the Carrier 2 domain; the sequence is KSLTASEKRL…AMASVLEDCG (78 aa). Ser-3577 bears the O-(pantetheine 4'-phosphoryl)serine mark. The reductase (RED) domain stretch occupies residues 3653–3870; sequence LTGSSGYLGR…MPVNEIVEAI (218 aa).

It in the C-terminal section; belongs to the NRP synthetase family.

The enzyme catalyses L-serine + 7 malonyl-CoA + acetyl-CoA + 2 S-adenosyl-L-methionine + ATP + 8 NADPH + 11 H(+) = (5S)-3-[(2E,6R,8E,10E,12E)-2,6-dimethyltetradeca-2,8,10,12-tetraenoyl]-5-(hydroxymethyl)pyrrolidine-2,4-dione + AMP + 2 S-adenosyl-L-homocysteine + 7 CO2 + diphosphate + 8 NADP(+) + 8 CoA + 6 H2O. Its pathway is mycotoxin biosynthesis. Its function is as follows. Hybrid PKS-NRPS synthetase; part of the gene cluster that mediates the biosynthesis of HIV-1 integrase inhibitor equisetin and of fusarisetin A, both trans-fused decalin-containing tetramic acids showing also antimicrobial activity. The PKS module of fsa1 together with the enoylreductase fsa3 catalyze the formation of the polyketide unit which is then conjugated to L-serine by the condensation domain of the fsa1 NRPS module. Activity of the Dieckmann cyclase domain (RED) results in release of the Dieckmann product intermediate. Diels-Alderase fsa2 is involved in endo-selective Diels-Alder cycloaddition to form the decalin ring, leading to the production of N-desmethylequisetin also called trichosetin. Subsequent N-methylation is carried out by fsa4 to give equisetin. The enzymatic gene responsible for the conversion of equisetin to fusarisetin A has not been identified yet and is probably located outside of the fsa cluster. This Fusarium sp. (strain FN080326) protein is Hybrid PKS-NRPS synthetase fsa1.